The primary structure comprises 447 residues: MSEKLDEVDSKSLDEINGSIKVPKNAGFWKTLMAYSGPGFLIAVGYMDPGNWITSIAGGAQFRYTLLSVILLSSLIAMLLQAMSARLGIVTGKDLAQLTRERTSKRVGFLLWIVAELAIMATDIAEIIGSGIALELLFHIPLIIGILITAADVLILLLLMKLGFRKIEAIVATLVAVILIVFAYEVLLSDPSISGIIKGYVPSVEILGNNSMLYLSLGIVGATVMPHDLYLGSSISQTREVDRKDRENVAQAIRFSTIDSNMQLFLAFIVNSLLLILGAALFYGTDSSLGRFVDLFNALSNNQIVGAIASPVLSMLFAVALLASGQSSTITGTLSGQIIMEGFIRLRVPLWVQRLVTRVLSVAPVLIFAIYYHGDEAKIENLLTFSQVFLSVALPFAVIPLVIYTSSKKLMGEFANRAWVKWCAWTATIVLILLNIYLILQTLGLIK.

11 consecutive transmembrane segments (helical) span residues 26–48 (AGFWKTLMAYSGPGFLIAVGYMD), 65–85 (TLLSVILLSSLIAMLLQAMSA), 108–128 (GFLLWIVAELAIMATDIAEII), 140–160 (IPLIIGILITAADVLILLLLM), 169–189 (AIVATLVAVILIVFAYEVLLS), 212–232 (MLYLSLGIVGATVMPHDLYLG), 264–284 (LFLAFIVNSLLLILGAALFYG), 304–324 (IVGAIASPVLSMLFAVALLAS), 359–379 (VLSVAPVLIFAIYYHGDEAKI), 383–403 (LTFSQVFLSVALPFAVIPLVI), and 426–446 (TATIVLILLNIYLILQTLGLI).

It belongs to the NRAMP family.

The protein localises to the cell membrane. In terms of biological role, h(+)-stimulated, divalent metal cation uptake system. The protein is Divalent metal cation transporter MntH of Pediococcus pentosaceus (strain ATCC 25745 / CCUG 21536 / LMG 10740 / 183-1w).